Reading from the N-terminus, the 469-residue chain is Ribulose bisphosphate carboxylase large chain (469 aa).

Residues 1-2 constitute a propeptide that is removed on maturation; the sequence is MS. P3 carries the post-translational modification N-acetylproline. Position 14 is an N6,N6,N6-trimethyllysine (K14). Positions 123 and 173 each coordinate substrate. K175 serves as the catalytic Proton acceptor. K177 contributes to the substrate binding site. K201, D203, and E204 together coordinate Mg(2+). K201 bears the N6-carboxylysine mark. Residue H294 is the Proton acceptor of the active site. Residues R295, H327, and S379 each contribute to the substrate site.

This sequence belongs to the RuBisCO large chain family. Type I subfamily. As to quaternary structure, heterohexadecamer of 8 large chains and 8 small chains; disulfide-linked. The disulfide link is formed within the large subunit homodimers. The cofactor is Mg(2+). The disulfide bond which can form in the large chain dimeric partners within the hexadecamer appears to be associated with oxidative stress and protein turnover.

It localises to the plastid. The protein localises to the chloroplast. The enzyme catalyses 2 (2R)-3-phosphoglycerate + 2 H(+) = D-ribulose 1,5-bisphosphate + CO2 + H2O. It catalyses the reaction D-ribulose 1,5-bisphosphate + O2 = 2-phosphoglycolate + (2R)-3-phosphoglycerate + 2 H(+). Its function is as follows. RuBisCO catalyzes two reactions: the carboxylation of D-ribulose 1,5-bisphosphate, the primary event in carbon dioxide fixation, as well as the oxidative fragmentation of the pentose substrate in the photorespiration process. Both reactions occur simultaneously and in competition at the same active site. In Atriplex patula (Common orache), this protein is Ribulose bisphosphate carboxylase large chain.